Consider the following 265-residue polypeptide: MTDLLTAAVLGLVEGLTEFLPVSSTGHLIITGYLLEYTGPKAESFQVAIQLGAILAVVFLYKERFAALFRFGTGHGRFSGLRGWYLLALTSAPASVLGLLTHSFIKEHLFGPVTVAWALAAGALYILAVEHKGEGTRYETLDDVSPALALGIGMFQCLALWPGFSRSAATIMGALLLGSRRRLAAEYSFVAAVPIMFAATGYDMYKSYSLFSPADIPFWAVGLLVSFASAWAAVKGFIHLVGRVTFRPFAWYRLALAPVVLLFWS.

8 consecutive transmembrane segments (helical) span residues 15–37 (GLTE…LLEY), 41–61 (KAES…VFLY), 85–105 (YLLA…HSFI), 109–129 (LFGP…ILAV), 144–164 (VSPA…WPGF), 183–203 (LAAE…TGYD), 218–238 (FWAV…KGFI), and 244–264 (VTFR…LLFW).

It belongs to the UppP family.

The protein resides in the cell inner membrane. The enzyme catalyses di-trans,octa-cis-undecaprenyl diphosphate + H2O = di-trans,octa-cis-undecaprenyl phosphate + phosphate + H(+). Its function is as follows. Catalyzes the dephosphorylation of undecaprenyl diphosphate (UPP). Confers resistance to bacitracin. This chain is Undecaprenyl-diphosphatase, found in Oleidesulfovibrio alaskensis (strain ATCC BAA-1058 / DSM 17464 / G20) (Desulfovibrio alaskensis).